Consider the following 445-residue polypeptide: Putative ubiquitin carboxyl-terminal hydrolase L293 (445 aa).

A USP domain is found at 133-441 (KALANFGNSC…SAYIILYGDI (309 aa)). Catalysis depends on C142, which acts as the Nucleophile. H384 serves as the catalytic Proton acceptor.

It belongs to the peptidase C19 family.

It localises to the virion. The enzyme catalyses Thiol-dependent hydrolysis of ester, thioester, amide, peptide and isopeptide bonds formed by the C-terminal Gly of ubiquitin (a 76-residue protein attached to proteins as an intracellular targeting signal).. The sequence is that of Putative ubiquitin carboxyl-terminal hydrolase L293 from Acanthamoeba polyphaga mimivirus (APMV).